Here is a 236-residue protein sequence, read N- to C-terminus: Small ribosomal subunit protein uS2c (236 aa).

The protein belongs to the universal ribosomal protein uS2 family.

It is found in the plastid. Its subcellular location is the chloroplast. The protein is Small ribosomal subunit protein uS2c (rps2) of Helianthus annuus (Common sunflower).